Here is a 442-residue protein sequence, read N- to C-terminus: Meiotically up-regulated gene 191 protein (442 aa).

Position 361 is a phosphothreonine (Thr-361). The span at 416–429 (RNNPSSGESTTLPQ) shows a compositional bias: polar residues. The disordered stretch occupies residues 416 to 442 (RNNPSSGESTTLPQPSHGKKDKDCVIS). Over residues 433–442 (GKKDKDCVIS) the composition is skewed to basic and acidic residues.

The protein localises to the cytoplasm. It localises to the nucleus. Has a role in meiosis. This chain is Meiotically up-regulated gene 191 protein (mug191), found in Schizosaccharomyces pombe (strain 972 / ATCC 24843) (Fission yeast).